The chain runs to 254 residues: Alcohol dehydrogenase (254 aa).

10–33 (FVAGLGGIGLDTSREIVKSGPKNL) contributes to the NAD(+) binding site. Serine 138 provides a ligand contact to substrate. The Proton acceptor role is filled by tyrosine 151.

This sequence belongs to the short-chain dehydrogenases/reductases (SDR) family. As to quaternary structure, homodimer.

The catalysed reaction is a primary alcohol + NAD(+) = an aldehyde + NADH + H(+). The enzyme catalyses a secondary alcohol + NAD(+) = a ketone + NADH + H(+). This is Alcohol dehydrogenase (Adh) from Drosophila mimica (Fruit fly).